Reading from the N-terminus, the 155-residue chain is Prespore-specific protein E (155 aa).

An N-terminal signal peptide occupies residues 1 to 20 (MRFISIFLIIVALCVSSSWA). N-linked (GlcNAc...) asparagine glycosylation is found at Asn22, Asn82, Asn85, and Asn102. Ser105 carries O-linked (GlcNAc) serine glycosylation. Asn133 carries GPI-like-anchor amidated asparagine lipidation. Residues 134-155 (SADKVAVGIAIIFGALISLLAL) constitute a propeptide, removed in mature form.

Post-translationally, the GPI-like-anchor contains a phosphoceramide group, rather than a phosphatidyl group.

The protein localises to the cell membrane. The chain is Prespore-specific protein E (pspE) from Dictyostelium discoideum (Social amoeba).